A 413-amino-acid polypeptide reads, in one-letter code: Multifunctional CCA protein (413 aa).

ATP is bound by residues glycine 8 and arginine 11. CTP is bound by residues glycine 8 and arginine 11. The Mg(2+) site is built by aspartate 21 and aspartate 23. 3 residues coordinate ATP: arginine 91, arginine 137, and arginine 140. CTP is bound by residues arginine 91, arginine 137, and arginine 140. The region spanning 228 to 329 (TGIHTLMVLA…IKIFDKADLW (102 aa)) is the HD domain.

Belongs to the tRNA nucleotidyltransferase/poly(A) polymerase family. Bacterial CCA-adding enzyme type 1 subfamily. In terms of assembly, monomer. Can also form homodimers and oligomers. It depends on Mg(2+) as a cofactor. Ni(2+) serves as cofactor.

It catalyses the reaction a tRNA precursor + 2 CTP + ATP = a tRNA with a 3' CCA end + 3 diphosphate. The catalysed reaction is a tRNA with a 3' CCA end + 2 CTP + ATP = a tRNA with a 3' CCACCA end + 3 diphosphate. Its function is as follows. Catalyzes the addition and repair of the essential 3'-terminal CCA sequence in tRNAs without using a nucleic acid template. Adds these three nucleotides in the order of C, C, and A to the tRNA nucleotide-73, using CTP and ATP as substrates and producing inorganic pyrophosphate. tRNA 3'-terminal CCA addition is required both for tRNA processing and repair. Also involved in tRNA surveillance by mediating tandem CCA addition to generate a CCACCA at the 3' terminus of unstable tRNAs. While stable tRNAs receive only 3'-terminal CCA, unstable tRNAs are marked with CCACCA and rapidly degraded. This is Multifunctional CCA protein from Shewanella woodyi (strain ATCC 51908 / MS32).